The primary structure comprises 610 residues: POU domain, class 6, transcription factor 1 (610 aa).

The tract at residues 55–87 (SSAGAAESGGDEEGSGQSLEATEEAQLDGPVTT) is disordered. The region spanning 448–522 (EEAINLEEIR…VLERWLAEAE (75 aa)) is the POU-specific domain. The homeobox DNA-binding region spans 543–602 (KRKRRTSFTPQAIEVLNTYFEKNSLPTGQEITEIAKELNYDREVVRVWFCNRRQTLKNTS).

Belongs to the POU transcription factor family. Class-6 subfamily. In terms of tissue distribution, ubiquitously expressed during embryogenesis.

The protein localises to the nucleus. In terms of biological role, transcription factor that binds with high affinity to the motif 5'-TAATGARAT-3'. The protein is POU domain, class 6, transcription factor 1 (pou6f1) of Danio rerio (Zebrafish).